Consider the following 576-residue polypeptide: Arginine--tRNA ligase (576 aa).

A 'HIGH' region motif is present at residues 122–132 (PNVAKEMHVGH).

It belongs to the class-I aminoacyl-tRNA synthetase family. As to quaternary structure, monomer.

The protein resides in the cytoplasm. It carries out the reaction tRNA(Arg) + L-arginine + ATP = L-arginyl-tRNA(Arg) + AMP + diphosphate. The polypeptide is Arginine--tRNA ligase (Serratia proteamaculans (strain 568)).